Consider the following 743-residue polypeptide: Coiled-coil domain-containing protein 30 (743 aa).

Composition is skewed to basic and acidic residues over residues 1 to 22 and 133 to 193; these read MSQE…REKQ and SPKE…MKPE. Disordered regions lie at residues 1 to 25, 114 to 193, 208 to 233, and 695 to 715; these read MSQE…QLAS, ENIC…MKPE, SLLQ…GDKL, and SKEA…LVCS. Coiled-coil stretches lie at residues 21–98 and 165–580; these read KQLA…QLNH and REGQ…LIHS. Low complexity predominate over residues 208–223; that stretch reads SLLQSQSSGDSSDDSG.

This sequence belongs to the prefoldin subunit beta family.

This Macaca fascicularis (Crab-eating macaque) protein is Coiled-coil domain-containing protein 30 (CCDC30).